A 381-amino-acid chain; its full sequence is tRNA pseudouridine synthase D (381 aa).

Asp-81 functions as the Nucleophile in the catalytic mechanism. The TRUD domain maps to 160–335 (GMPNYFGPQR…TLGSRRFFWV (176 aa)).

This sequence belongs to the pseudouridine synthase TruD family.

The enzyme catalyses uridine(13) in tRNA = pseudouridine(13) in tRNA. Functionally, responsible for synthesis of pseudouridine from uracil-13 in transfer RNAs. This chain is tRNA pseudouridine synthase D, found in Helicobacter pylori (strain Shi470).